The primary structure comprises 175 residues: Alpha-crystallin B chain (175 aa).

Met1 is subject to N-acetylmethionine. Ser19 is subject to Phosphoserine. Ser41 carries O-linked (GlcNAc) serine glycosylation. 2 positions are modified to phosphoserine: Ser45 and Ser59. In terms of domain architecture, sHSP spans 56–164; it reads RAPSWIDTGL…PERTIPITRE (109 aa). Zn(2+) is bound at residue His83. Lys92 carries the N6-acetyllysine modification. Residues His104, Glu106, His111, and His119 each coordinate Zn(2+). Residues 142–175 form a disordered region; it reads VLTVNGPRRQASGPERTIPITREEKPAVTAAPKK. Lys166 carries the N6-acetyllysine modification. O-linked (GlcNAc) threonine glycosylation occurs at Thr170.

It belongs to the small heat shock protein (HSP20) family. In terms of assembly, heteromer composed of three CRYAA and one CRYAB subunits. Aggregates with homologous proteins, including the small heat shock protein HSPB1, to form large heteromeric complexes. Inter-subunit bridging via zinc ions enhances stability, which is crucial as there is no protein turn over in the lens. Interacts with HSPBAP1 and TTN/titin. Interacts with TMEM109; in the cellular response to DNA damage. Interacts with DES; binds rapidly during early stages of DES filament assembly and a reduced binding seen in the later stages. Interacts with TMED10; the interaction mediates the translocation from the cytoplasm into the ERGIC (endoplasmic reticulum-Golgi intermediate compartment) and thereby secretion. Interacts with ATP6V1A and with MTOR, forming a ternary complex.

The protein resides in the cytoplasm. Its subcellular location is the nucleus. It localises to the secreted. It is found in the lysosome. In terms of biological role, may contribute to the transparency and refractive index of the lens. Has chaperone-like activity, preventing aggregation of various proteins under a wide range of stress conditions. In lens epithelial cells, stabilizes the ATP6V1A protein, preventing its degradation by the proteasome. The protein is Alpha-crystallin B chain (CRYAB) of Sus scrofa (Pig).